The following is a 114-amino-acid chain: MATGAQSFYELYRRSSIGLALTDTLDDLISDERINPQLAMKILGNFDQAITEALQKNVKARLQFKGSLDTYRFCDEVWTFLIKNVTFKMDTGGQAVTANKVKIVSCNAKKPEGT.

It belongs to the TFIIA subunit 2 family. As to quaternary structure, TFIIA is a heterodimer composed of the large toa1 and the small toa2 subunits.

It is found in the nucleus. Its function is as follows. TFIIA is a component of the transcription machinery of RNA polymerase II and plays an important role in transcriptional activation. TFIIA in a complex with tbp mediates transcriptional activity. This chain is Transcription initiation factor IIA subunit 2 (toa2), found in Fusarium vanettenii (strain ATCC MYA-4622 / CBS 123669 / FGSC 9596 / NRRL 45880 / 77-13-4) (Fusarium solani subsp. pisi).